A 282-amino-acid chain; its full sequence is Nudix hydrolase 7 (282 aa).

The Nudix hydrolase domain maps to 101–233 (SHVVGAGALV…KNEMFKFMAN (133 aa)). Residues 139 to 160 (GVINEGEDIWTGVAREVEEETG) carry the Nudix box motif. 2 residues coordinate Mg(2+): glutamate 154 and glutamate 158.

The protein belongs to the Nudix hydrolase family. As to quaternary structure, homodimer. Interacts with RACK1A, GG1 and GG2. Mg(2+) serves as cofactor. As to expression, expressed in stems, leaves, roots, flowers and siliques.

Its subcellular location is the nucleus. The protein localises to the cytoplasm. It localises to the cell membrane. The catalysed reaction is ADP-D-ribose + H2O = D-ribose 5-phosphate + AMP + 2 H(+). It carries out the reaction NAD(+) + H2O = beta-nicotinamide D-ribonucleotide + AMP + 2 H(+). It catalyses the reaction NADH + H2O = reduced beta-nicotinamide D-ribonucleotide + AMP + 2 H(+). With respect to regulation, not inhibited by fluoride. Functionally, mediates the hydrolysis of some nucleoside diphosphate derivatives. Can use both NADH and ADP-ribose as substrates, but not 8-oxo-dGTP, cyclic ADP-ribose, GDP-mannose, UDP-glucose, ATP, or GTP. Exerts negative control of EDS1 signaling. The polypeptide is Nudix hydrolase 7 (NUDT7) (Arabidopsis thaliana (Mouse-ear cress)).